Consider the following 129-residue polypeptide: Intraflagellar transport protein 20 homolog (129 aa).

Residues 89 to 121 are a coiled coil; sequence VLLQMTIRELTVEKERLRVELEAVRKIEKEQDE.

As to quaternary structure, component of the IFT complex B composed of at least che-2, che-13, dyf-1, dyf-3, dyf-6, dyf-11, dyf-13, ift-20, ift-74, ift-81, ifta-2, osm-1, osm-5 and osm-6.

The protein localises to the cell projection. It localises to the cilium. In terms of biological role, component of the intraflagellar transport (IFT) complex B required for transport of proteins in the motile cilium. Required for ciliary entrance and transport of specific ciliary cargo proteins such as che-3 which are related to motility. The chain is Intraflagellar transport protein 20 homolog from Caenorhabditis elegans.